The following is a 541-amino-acid chain: Atlastin-3 (541 aa).

The interval 1-22 is disordered; sequence MLSPQRTAAVASRGAGDAMENG. The interval 1 to 25 is N-terminal hypervariable region (HVR); sequence MLSPQRTAAVASRGAGDAMENGKPG. Residues 1–445 lie on the Cytoplasmic side of the membrane; sequence MLSPQRTAAV…NVFSTFRTPA (445 aa). The GB1/RHD3-type G domain occupies 57-305; it reads DLDVVVVSVA…LIPYVLNPSK (249 aa). GDP contacts are provided by R70, K71, G72, K73, S74, F75, and R109. D142 contacts Mg(2+). 4 residues coordinate GDP: R213, D214, V272, and S275. The 3HB (three-helix bundle) domain stretch occupies residues 343–434; that stretch reads MLQATAEANN…YENFCKHNGS (92 aa). K391 bears the N6-acetyllysine mark. The helical transmembrane segment at 446–466 threads the bilayer; the sequence is VLFTGIAALYIASGFTGFIGL. Residue E467 is a topological domain, lumenal. Residues 468–488 form a helical membrane-spanning segment; the sequence is VVAQLFNCMVGLLLIALLTWG. At 489–541 the chain is on the cytoplasmic side; sequence YIRYSGQYRELGGAIDSGAAYVLEQASSHIGNSTQAAVRDAVVGRPPADKKSQ.

This sequence belongs to the TRAFAC class dynamin-like GTPase superfamily. GB1/RHD3 GTPase family. GB1 subfamily. In terms of assembly, monomeric and homodimeric. The homodimer, transiently formed by two molecules on opposing membranes, is the active form mediating ER membrane fusion. Interacts with ZFYVE27; both proteins are involved in endoplasmic reticulum tubular network organization. Interacts with REEP5; both proteins are involved in endoplasmic reticulum tubular network organization. Expressed in cardiomyocytes (at protein level).

The protein localises to the endoplasmic reticulum membrane. The catalysed reaction is GTP + H2O = GDP + phosphate + H(+). Functionally, atlastin-3 (ATL3) is a membrane-anchored GTPase that mediates the GTP-dependent fusion of endoplasmic reticulum (ER) membranes, maintaining the continuous ER network. It facilitates the formation of three-way junctions where ER tubules intersect. Two atlastin-3 on neighboring ER tubules bind GTP and form loose homodimers through the GB1/RHD3-type G domains and 3HB regions. Upon GTP hydrolysis, the 3HB regions tighten, pulling the membranes together to drive their fusion. After fusion, the homodimer disassembles upon release of inorganic phosphate (Pi). Subsequently, GDP dissociates, resetting the monomers to a conformation ready for a new fusion cycle. This chain is Atlastin-3, found in Mus musculus (Mouse).